Consider the following 548-residue polypeptide: uncharacterized protein (548 aa).

The 193-residue stretch at 8–200 (KLFADMIIQG…LLCVYEGFLK (193 aa)) folds into the DhaL domain.

This is an uncharacterized protein from Staphylococcus aureus (strain bovine RF122 / ET3-1).